Consider the following 868-residue polypeptide: Leucine-rich repeat receptor-like serine/threonine-protein kinase At2g14510 (868 aa).

The N-terminal stretch at Met1–Ser23 is a signal peptide. Residues Gln24–Ala510 are Extracellular-facing. N-linked (GlcNAc...) asparagine glycans are attached at residues Asn48, Asn68, Asn231, Asn235, Asn258, Asn291, Asn433, and Asn446. 3 LRR repeats span residues Arg412 to Thr435, Met436 to Ile458, and Pro460 to Arg482. Residue Asn495 is glycosylated (N-linked (GlcNAc...) asparagine). A helical membrane pass occupies residues Ile511–Phe531. Topologically, residues Arg532–Arg868 are cytoplasmic. The Protein kinase domain occupies Asn563–Asn832. Residues Leu569 to Val577 and Lys590 contribute to the ATP site. Tyr635 carries the phosphotyrosine modification. Asp687 serves as the catalytic Proton acceptor. Phosphoserine is present on Ser721. 2 positions are modified to phosphothreonine: Thr722 and Thr727. At Tyr735 the chain carries Phosphotyrosine.

This sequence belongs to the protein kinase superfamily. Ser/Thr protein kinase family.

It is found in the cell membrane. The catalysed reaction is L-seryl-[protein] + ATP = O-phospho-L-seryl-[protein] + ADP + H(+). It catalyses the reaction L-threonyl-[protein] + ATP = O-phospho-L-threonyl-[protein] + ADP + H(+). The polypeptide is Leucine-rich repeat receptor-like serine/threonine-protein kinase At2g14510 (Arabidopsis thaliana (Mouse-ear cress)).